Here is a 187-residue protein sequence, read N- to C-terminus: Ribosome maturation factor RimM (187 aa).

Positions 96–169 constitute a PRC barrel domain; that stretch reads EDEFFYADLE…KLVIDPTAAG (74 aa).

This sequence belongs to the RimM family. As to quaternary structure, binds ribosomal protein uS19.

It is found in the cytoplasm. In terms of biological role, an accessory protein needed during the final step in the assembly of 30S ribosomal subunit, possibly for assembly of the head region. Essential for efficient processing of 16S rRNA. May be needed both before and after RbfA during the maturation of 16S rRNA. It has affinity for free ribosomal 30S subunits but not for 70S ribosomes. The protein is Ribosome maturation factor RimM of Rhizobium meliloti (strain 1021) (Ensifer meliloti).